The sequence spans 63 residues: Large ribosomal subunit protein bL32 (63 aa).

The disordered stretch occupies residues 1–20 (MANPKAKMSKSRRDKRRAQF). The segment covering 7-18 (KMSKSRRDKRRA) has biased composition (basic residues).

Belongs to the bacterial ribosomal protein bL32 family.

This Chlorobaculum tepidum (strain ATCC 49652 / DSM 12025 / NBRC 103806 / TLS) (Chlorobium tepidum) protein is Large ribosomal subunit protein bL32.